Here is a 66-residue protein sequence, read N- to C-terminus: Large ribosomal subunit protein bL35 (66 aa).

Belongs to the bacterial ribosomal protein bL35 family.

In Ruegeria sp. (strain TM1040) (Silicibacter sp.), this protein is Large ribosomal subunit protein bL35.